The chain runs to 287 residues: Diphthine methyl ester synthase (287 aa).

Residues Leu9, Asp84, Gly87, 112 to 113 (SI), Leu163, Val221, and His248 each bind S-adenosyl-L-methionine.

This sequence belongs to the diphthine synthase family.

Its subcellular location is the cytoplasm. The catalysed reaction is 2-[(3S)-amino-3-carboxypropyl]-L-histidyl-[translation elongation factor 2] + 4 S-adenosyl-L-methionine = diphthine methyl ester-[translation elongation factor 2] + 4 S-adenosyl-L-homocysteine + 3 H(+). The protein operates within protein modification; peptidyl-diphthamide biosynthesis. In terms of biological role, S-adenosyl-L-methionine-dependent methyltransferase that catalyzes four methylations of the modified target histidine residue in translation elongation factor 2 (EF-2), to form an intermediate called diphthine methyl ester. The four successive methylation reactions represent the second step of diphthamide biosynthesis. This is Diphthine methyl ester synthase (dph-5) from Neurospora crassa (strain ATCC 24698 / 74-OR23-1A / CBS 708.71 / DSM 1257 / FGSC 987).